The chain runs to 382 residues: MPINDQFPSGLRILVVDDDTSCLFILEKMLLRLMYQVTICSQADVALTILRERKDSFDLVLSDVHMPGMNGYNLLQQVGLLEMDLPVIMMSVDGRTTTVMTGINHGACDYLIKPIRPEELKNIWQHVVRRKCVMKKELRSSQALEDNKNSGSLETVVVSVSECSEESLMKCRNKKKKKKRSVDRDDNEDDLLLDPGNSKKSRVVWSIELHQQFVNAVNKLGIDKAVPKRILELMNVPGLSRENVASHLQKFRLYLKRLSGEASQSNDSESTKRYENIQALVSSGQLHPQTLAALFGQPIDNHHSASFGVWIPNDNLGRSQNEHFSVDVSSASNRPVSVAVHGLSSSANFRQRGDVNNNRIRQGYGSNVNEESWILERSSRQR.

One can recognise a Response regulatory domain in the interval 12–128; the sequence is RILVVDDDTS…ELKNIWQHVV (117 aa). D63 bears the 4-aspartylphosphate mark. The segment covering 171–181 has biased composition (basic residues); that stretch reads CRNKKKKKKRS. The disordered stretch occupies residues 171–193; it reads CRNKKKKKKRSVDRDDNEDDLLL. The Nuclear localization signal motif lies at 199–202; the sequence is KKSR. A DNA-binding region (myb-like GARP) is located at residues 202-252; sequence RVVWSIELHQQFVNAVNKLGIDKAVPKRILELMNVPGLSRENVASHLQKFR.

This sequence belongs to the ARR family. Type-B subfamily. In terms of assembly, binds the target DNA as a monomer. In terms of processing, two-component system major event consists of a His-to-Asp phosphorelay between a sensor histidine kinase (HK) and a response regulator (RR). In plants, the His-to-Asp phosphorelay involves an additional intermediate named Histidine-containing phosphotransfer protein (HPt). This multistep phosphorelay consists of a His-Asp-His-Asp sequential transfer of a phosphate group between first a His and an Asp of the HK protein, followed by the transfer to a conserved His of the HPt protein and finally the transfer to an Asp in the receiver domain of the RR protein. Predominantly expressed in young leaf tissue.

The protein resides in the nucleus. Transcriptional activator that binds specifically to the DNA sequence 5'-[AG]GATT-3'. Functions as a response regulator involved in His-to-Asp phosphorelay signal transduction system. Phosphorylation of the Asp residue in the receiver domain activates the ability of the protein to promote the transcription of target genes. Could directly activate some type-A response regulators in response to cytokinins. In Arabidopsis thaliana (Mouse-ear cress), this protein is Two-component response regulator ARR14 (ARR14).